The chain runs to 244 residues: MATGGKKSAGRTTGSGPAGGSRNLTVKVKTAKRRKLSSTLWLQRQLNDPYVHEAKRLGYRSRAAFKMIQLDERFHILKPGLRVVDLGAAPGGWTQVAVEKVGALKPKGGGKVVGMDILEWDPLPGAITLQGDFLADDAPDRLKEALGGPADVVLSDMAAPTTGHPSTDHLRIIGLVEVALHFALEVLTPGGTFVAKVFQGGTEKTLLDQLKKNFTTVRHAKPPASRQGSAETYVVATGFRGSSE.

The interval 1–23 is disordered; sequence MATGGKKSAGRTTGSGPAGGSRN. Positions 91, 93, 116, 132, and 156 each coordinate S-adenosyl-L-methionine. The active-site Proton acceptor is Lys-196.

The protein belongs to the class I-like SAM-binding methyltransferase superfamily. RNA methyltransferase RlmE family.

It localises to the cytoplasm. It carries out the reaction uridine(2552) in 23S rRNA + S-adenosyl-L-methionine = 2'-O-methyluridine(2552) in 23S rRNA + S-adenosyl-L-homocysteine + H(+). Functionally, specifically methylates the uridine in position 2552 of 23S rRNA at the 2'-O position of the ribose in the fully assembled 50S ribosomal subunit. This is Ribosomal RNA large subunit methyltransferase E from Paramagnetospirillum magneticum (strain ATCC 700264 / AMB-1) (Magnetospirillum magneticum).